A 458-amino-acid chain; its full sequence is UDP-N-acetylmuramoylalanine--D-glutamate ligase (458 aa).

124-130 serves as a coordination point for ATP; the sequence is GSDGKTT.

The protein belongs to the MurCDEF family.

It localises to the cytoplasm. It carries out the reaction UDP-N-acetyl-alpha-D-muramoyl-L-alanine + D-glutamate + ATP = UDP-N-acetyl-alpha-D-muramoyl-L-alanyl-D-glutamate + ADP + phosphate + H(+). It participates in cell wall biogenesis; peptidoglycan biosynthesis. Functionally, cell wall formation. Catalyzes the addition of glutamate to the nucleotide precursor UDP-N-acetylmuramoyl-L-alanine (UMA). The polypeptide is UDP-N-acetylmuramoylalanine--D-glutamate ligase (Clostridium botulinum (strain Loch Maree / Type A3)).